The following is a 517-amino-acid chain: Glutamate--cysteine ligase (517 aa).

This sequence belongs to the glutamate--cysteine ligase type 1 family. Type 1 subfamily.

The catalysed reaction is L-cysteine + L-glutamate + ATP = gamma-L-glutamyl-L-cysteine + ADP + phosphate + H(+). It participates in sulfur metabolism; glutathione biosynthesis; glutathione from L-cysteine and L-glutamate: step 1/2. The chain is Glutamate--cysteine ligase from Pectobacterium atrosepticum (strain SCRI 1043 / ATCC BAA-672) (Erwinia carotovora subsp. atroseptica).